A 303-amino-acid chain; its full sequence is Proteasome subunit beta (303 aa).

Residues 1-67 constitute a propeptide, removed in mature form; by autocatalysis; sequence MTWQFPDRLS…SGGTGQLPHG (67 aa). The active-site Nucleophile is the threonine 68.

Belongs to the peptidase T1B family. The 20S proteasome core is composed of 14 alpha and 14 beta subunits that assemble into four stacked heptameric rings, resulting in a barrel-shaped structure. The two inner rings, each composed of seven catalytic beta subunits, are sandwiched by two outer rings, each composed of seven alpha subunits. The catalytic chamber with the active sites is on the inside of the barrel. Has a gated structure, the ends of the cylinder being occluded by the N-termini of the alpha-subunits. Is capped by the proteasome-associated ATPase, ARC.

It is found in the cytoplasm. The enzyme catalyses Cleavage of peptide bonds with very broad specificity.. It participates in protein degradation; proteasomal Pup-dependent pathway. The formation of the proteasomal ATPase ARC-20S proteasome complex, likely via the docking of the C-termini of ARC into the intersubunit pockets in the alpha-rings, may trigger opening of the gate for substrate entry. Interconversion between the open-gate and close-gate conformations leads to a dynamic regulation of the 20S proteasome proteolysis activity. In terms of biological role, component of the proteasome core, a large protease complex with broad specificity involved in protein degradation. The polypeptide is Proteasome subunit beta (Mycobacterium avium (strain 104)).